Consider the following 416-residue polypeptide: Serine hydroxymethyltransferase (416 aa).

(6S)-5,6,7,8-tetrahydrofolate is bound by residues Leu118 and 122-124 (GHL). N6-(pyridoxal phosphate)lysine is present on Lys226. Glu242 serves as a coordination point for (6S)-5,6,7,8-tetrahydrofolate.

This sequence belongs to the SHMT family. Homodimer. It depends on pyridoxal 5'-phosphate as a cofactor.

It localises to the cytoplasm. The enzyme catalyses (6R)-5,10-methylene-5,6,7,8-tetrahydrofolate + glycine + H2O = (6S)-5,6,7,8-tetrahydrofolate + L-serine. Its pathway is one-carbon metabolism; tetrahydrofolate interconversion. The protein operates within amino-acid biosynthesis; glycine biosynthesis; glycine from L-serine: step 1/1. Catalyzes the reversible interconversion of serine and glycine with tetrahydrofolate (THF) serving as the one-carbon carrier. This reaction serves as the major source of one-carbon groups required for the biosynthesis of purines, thymidylate, methionine, and other important biomolecules. Also exhibits THF-independent aldolase activity toward beta-hydroxyamino acids, producing glycine and aldehydes, via a retro-aldol mechanism. The protein is Serine hydroxymethyltransferase of Helicobacter pylori (strain HPAG1).